Consider the following 175-residue polypeptide: Apoptosis regulator Bcl-2 homolog (175 aa).

Residues 37–42 are mediates interaction with human NOP53 and localization to host nucleolus; sequence KLYITG. The helical transmembrane segment at 153–173 threads the bilayer; that stretch reads MTALLGSIALLATILAAVAMS.

The protein belongs to the Bcl-2 family. As to quaternary structure, interacts with human NOP53; may sequester ORF16 in host nucleolus and reduce its antiapoptotic activity. Interacts with ORF55.

It localises to the host membrane. The protein resides in the host mitochondrion. Its subcellular location is the host nucleus. The protein localises to the host nucleolus. In terms of biological role, plays a role in the protection against apoptosis mediated by cytotoxic cells during the immune response to acute and persistent viral infection. Contributes therefore to latency establishment. Also plays a role in the inhibition of host starvation-induced autophagy which ultimately contributes to the viral chronic infection. Also participates in the viral genome replication within host nucleus. The sequence is that of Apoptosis regulator Bcl-2 homolog (vBCL2) from Homo sapiens (Human).